We begin with the raw amino-acid sequence, 206 residues long: Photosynthetic reaction center cytochrome c-551 (206 aa).

3 helical membrane passes run 10–30, 49–69, and 76–96; these read IALA…VSFL, FMGW…LGKM, and KWFL…FFSL. Heme-binding residues include Cys-152, Cys-155, His-156, and Met-182.

In terms of assembly, component of the photosynthetic reaction center. The reaction center interacts with the Fenna-Matthews-Olson (FMO, fmoA) complex. Post-translationally, binds 1 heme group per subunit.

The protein localises to the cell inner membrane. Functionally, monoheme cytochrome which is the immediate electron donor to P840 of the photosynthetic reaction center complex. This Chlorobaculum parvum (strain DSM 263 / NCIMB 8327) (Chlorobium vibrioforme subsp. thiosulfatophilum) protein is Photosynthetic reaction center cytochrome c-551 (pscC).